An 837-amino-acid chain; its full sequence is Thioredoxin domain-containing protein 3 homolog (837 aa).

One can recognise a Thioredoxin domain in the interval 6–115 (EQIQLQKEIL…LKNVERELKQ (110 aa)). A disulfide bridge links Cys-39 with Cys-42. NDK regions lie at residues 201–345 (KEVT…SVPI), 355–491 (IEKT…FPKQ), and 493–629 (TLAV…EVLP). Positions 633 to 837 (VKDSVASISM…EEKTEEQTAS (205 aa)) are disordered. Positions 638–647 (ASISMEQSQV) are enriched in polar residues. The span at 652 to 670 (EEGGEEQTEQPAGEGEEQQ) shows a compositional bias: acidic residues. 3 stretches are compositionally biased toward low complexity: residues 671–707 (AEQP…PPAE), 718–752 (QQTQ…AEQT), and 766–787 (APAT…QQTQ). Residues 805-819 (AGGGEEAVATEGGGE) show a composition bias toward gly residues. A compositionally biased stretch (basic and acidic residues) spans 820-837 (GDAKPEGGEEKTEEQTAS).

In the C-terminal section; belongs to the NDK family. In terms of assembly, monomer. In terms of tissue distribution, testis-specific. In sperm, it is a component of the arm dynein of sperm axoneme.

Its function is as follows. Probably required during the final stages of sperm tail maturation in the testis and/or epididymis, where extensive disulfide bonding of fibrous sheath (FS) proteins occurs. In vitro, it has neither nucleoside diphosphate kinase (NDPK) activity nor reducing activity on disulfide bonds. Exhibits a 3'-5' exonuclease activity with a preference for single-stranded DNA, suggesting roles in DNA proofreading and repair. This is Thioredoxin domain-containing protein 3 homolog (NME8) from Heliocidaris crassispina (Sea urchin).